Here is a 92-residue protein sequence, read N- to C-terminus: Small ribosomal subunit protein uS19 (92 aa).

The protein belongs to the universal ribosomal protein uS19 family.

Its function is as follows. Protein S19 forms a complex with S13 that binds strongly to the 16S ribosomal RNA. In Rhodopseudomonas palustris (strain BisB5), this protein is Small ribosomal subunit protein uS19.